A 420-amino-acid chain; its full sequence is Membrane protein UL43 homolog (420 aa).

11 consecutive transmembrane segments (helical) span residues 58–78 (IFSI…IQFI), 81–101 (KIIY…AFIV), 114–134 (IGKP…TLIT), 157–177 (LMCF…CLAT), 181–201 (LTWK…ISAP), 203–223 (GNIS…INVV), 278–298 (QIPM…VIAL), 312–332 (TDML…IFIP), 343–363 (IIIL…FGLV), 364–384 (LGPT…CINI), and 399–419 (VVKS…LVAL).

Belongs to the alphaherpesvirinae HHV-1 UL43 family.

The protein resides in the host membrane. The chain is Membrane protein UL43 homolog (MDV056) from Gallus gallus (Chicken).